The chain runs to 131 residues: Ponticulin-like protein M (131 aa).

The signal sequence occupies residues 1–19; it reads MKFLSTLILLLSVLALVRG. Residue Ser-106 is the site of GPI-like-anchor amidated serine attachment. The propeptide at 107-131 is removed in mature form; the sequence is NSASSPLTTAVLFVVAFAAAIALLL.

Belongs to the ponticulin family. Post-translationally, the GPI-like-anchor contains a phosphoceramide group, rather than a phosphatidyl group.

The protein localises to the cell membrane. In terms of biological role, binds F-actin and nucleates actin assembly. This Dictyostelium discoideum (Social amoeba) protein is Ponticulin-like protein M (ponM).